A 430-amino-acid chain; its full sequence is Histidine--tRNA ligase (430 aa).

Belongs to the class-II aminoacyl-tRNA synthetase family. In terms of assembly, homodimer.

The protein localises to the cytoplasm. It catalyses the reaction tRNA(His) + L-histidine + ATP = L-histidyl-tRNA(His) + AMP + diphosphate + H(+). The chain is Histidine--tRNA ligase (hisS) from Clostridium acetobutylicum (strain ATCC 824 / DSM 792 / JCM 1419 / IAM 19013 / LMG 5710 / NBRC 13948 / NRRL B-527 / VKM B-1787 / 2291 / W).